Here is a 182-residue protein sequence, read N- to C-terminus: Bifunctional protein PyrR (182 aa).

Residues 97 to 109 (VVLVDDVIFRGRT) carry the PRPP-binding motif.

This sequence belongs to the purine/pyrimidine phosphoribosyltransferase family. PyrR subfamily.

It catalyses the reaction UMP + diphosphate = 5-phospho-alpha-D-ribose 1-diphosphate + uracil. In terms of biological role, regulates the transcription of the pyrimidine nucleotide (pyr) operon in response to exogenous pyrimidines. Its function is as follows. Also displays a weak uracil phosphoribosyltransferase activity which is not physiologically significant. The chain is Bifunctional protein PyrR from Synechococcus sp. (strain JA-2-3B'a(2-13)) (Cyanobacteria bacterium Yellowstone B-Prime).